The sequence spans 210 residues: Pyridoxine/pyridoxamine 5'-phosphate oxidase (210 aa).

Substrate-binding positions include 7–10 (RDEY) and K65. Residues 60-65 (RMVLLK), 75-76 (FT), R81, K82, and Q104 each bind FMN. Substrate is bound by residues Y122, R126, and S130. FMN-binding positions include 139-140 (QS) and W183. Residue 189-191 (RLH) participates in substrate binding. R193 lines the FMN pocket.

It belongs to the pyridoxamine 5'-phosphate oxidase family. Homodimer. Requires FMN as cofactor.

The enzyme catalyses pyridoxamine 5'-phosphate + O2 + H2O = pyridoxal 5'-phosphate + H2O2 + NH4(+). It carries out the reaction pyridoxine 5'-phosphate + O2 = pyridoxal 5'-phosphate + H2O2. Its pathway is cofactor metabolism; pyridoxal 5'-phosphate salvage; pyridoxal 5'-phosphate from pyridoxamine 5'-phosphate: step 1/1. It functions in the pathway cofactor metabolism; pyridoxal 5'-phosphate salvage; pyridoxal 5'-phosphate from pyridoxine 5'-phosphate: step 1/1. Catalyzes the oxidation of either pyridoxine 5'-phosphate (PNP) or pyridoxamine 5'-phosphate (PMP) into pyridoxal 5'-phosphate (PLP). The polypeptide is Pyridoxine/pyridoxamine 5'-phosphate oxidase (Haemophilus influenzae (strain 86-028NP)).